The following is a 518-amino-acid chain: Glutamate--cysteine ligase (518 aa).

The protein belongs to the glutamate--cysteine ligase type 1 family. Type 1 subfamily.

The enzyme catalyses L-cysteine + L-glutamate + ATP = gamma-L-glutamyl-L-cysteine + ADP + phosphate + H(+). It functions in the pathway sulfur metabolism; glutathione biosynthesis; glutathione from L-cysteine and L-glutamate: step 1/2. The polypeptide is Glutamate--cysteine ligase (Escherichia coli O8 (strain IAI1)).